A 516-amino-acid polypeptide reads, in one-letter code: Putative protein NRT1/ PTR FAMILY 2.2 (516 aa).

Helical transmembrane passes span 31-51, 67-87, 90-110, 138-158, 174-194, 201-221, 320-340, 362-382, 394-414, 437-457, and 476-496; these read TLLGLSIASFGWVMNLVVFLI, IVNGCVSMLPVVAAILADSFF, IPVISVSAFISLLGIILLTMI, ILYIALALVIIGSAGTRFTLA, FFNWYFLTLYTGAITGATAIV, SWKLGFGLCAVANLISFIVFV, LLLAIIFVSTPMVTQTSLIIL, VIVIITACIVILMNNCLVYPM, LQKVGIGHVFIILSMAISAIV, FIASVVIGISFYLSTALITLI, and VYWLLVIVGVLNYFLVCAWFY.

This sequence belongs to the major facilitator superfamily. Proton-dependent oligopeptide transporter (POT/PTR) (TC 2.A.17) family. In terms of tissue distribution, not detected.

The protein resides in the membrane. In terms of biological role, transporter involved in a passive nitrate efflux. In Arabidopsis thaliana (Mouse-ear cress), this protein is Putative protein NRT1/ PTR FAMILY 2.2 (NPF2.2).